The chain runs to 393 residues: Chorismate synthase (393 aa).

NADP(+) is bound by residues arginine 39 and arginine 45. FMN is bound by residues 133-135 (RSS), 256-257 (NA), glycine 301, 316-320 (KPIPT), and arginine 342.

It belongs to the chorismate synthase family. Homotetramer. FMNH2 is required as a cofactor.

The catalysed reaction is 5-O-(1-carboxyvinyl)-3-phosphoshikimate = chorismate + phosphate. The protein operates within metabolic intermediate biosynthesis; chorismate biosynthesis; chorismate from D-erythrose 4-phosphate and phosphoenolpyruvate: step 7/7. Its function is as follows. Catalyzes the anti-1,4-elimination of the C-3 phosphate and the C-6 proR hydrogen from 5-enolpyruvylshikimate-3-phosphate (EPSP) to yield chorismate, which is the branch point compound that serves as the starting substrate for the three terminal pathways of aromatic amino acid biosynthesis. This reaction introduces a second double bond into the aromatic ring system. The sequence is that of Chorismate synthase from Lysinibacillus sphaericus (strain C3-41).